We begin with the raw amino-acid sequence, 269 residues long: Imidazole glycerol phosphate synthase subunit HisF (269 aa).

Residues Asp23 and Asp142 contribute to the active site.

The protein belongs to the HisA/HisF family. As to quaternary structure, heterodimer of HisH and HisF.

The protein resides in the cytoplasm. The enzyme catalyses 5-[(5-phospho-1-deoxy-D-ribulos-1-ylimino)methylamino]-1-(5-phospho-beta-D-ribosyl)imidazole-4-carboxamide + L-glutamine = D-erythro-1-(imidazol-4-yl)glycerol 3-phosphate + 5-amino-1-(5-phospho-beta-D-ribosyl)imidazole-4-carboxamide + L-glutamate + H(+). Its pathway is amino-acid biosynthesis; L-histidine biosynthesis; L-histidine from 5-phospho-alpha-D-ribose 1-diphosphate: step 5/9. Functionally, IGPS catalyzes the conversion of PRFAR and glutamine to IGP, AICAR and glutamate. The HisF subunit catalyzes the cyclization activity that produces IGP and AICAR from PRFAR using the ammonia provided by the HisH subunit. The sequence is that of Imidazole glycerol phosphate synthase subunit HisF from Bordetella pertussis (strain Tohama I / ATCC BAA-589 / NCTC 13251).